A 306-amino-acid chain; its full sequence is Protein LOT5 (306 aa).

It belongs to the LOT5 family.

It is found in the cytoplasm. It localises to the nucleus. The polypeptide is Protein LOT5 (LOT5) (Saccharomyces cerevisiae (strain ATCC 204508 / S288c) (Baker's yeast)).